Consider the following 145-residue polypeptide: Transcription antitermination protein NusB (145 aa).

The protein belongs to the NusB family.

In terms of biological role, involved in transcription antitermination. Required for transcription of ribosomal RNA (rRNA) genes. Binds specifically to the boxA antiterminator sequence of the ribosomal RNA (rrn) operons. This Acetivibrio thermocellus (strain ATCC 27405 / DSM 1237 / JCM 9322 / NBRC 103400 / NCIMB 10682 / NRRL B-4536 / VPI 7372) (Clostridium thermocellum) protein is Transcription antitermination protein NusB.